Reading from the N-terminus, the 211-residue chain is MEEPPVREEEEEEGEEDEERDEVGPEGALGKSPFQLTAEDVYDISYLLGRELMALGSDPRVTQLQFKVVRVLEMLEALVNEGSLALEELKMERDHLRKEVEGLRRQSPPASGEVNLGPNKMVVDLTDPNRPRFTLQELRDVLQERNKLKSQLLVVQEELQCYKSGLIPPREGPGGRREKDAVVTSAKNAGRNKEEKTIIKKLFFFRSGKQT.

Residues 1-32 (MEEPPVREEEEEEGEEDEERDEVGPEGALGKS) are disordered. The span at 8 to 21 (EEEEEEGEEDEERD) shows a compositional bias: acidic residues. Positions 24 to 106 (GPEGALGKSP…RKEVEGLRRQ (83 aa)) constitute an RH1 domain. Residues 70–164 (RVLEMLEALV…VQEELQCYKS (95 aa)) are a coiled coil. Position 107 is a phosphoserine (Ser-107). The RH2 domain maps to 130–201 (RPRFTLQELR…NKEEKTIIKK (72 aa)). Residues 166-190 (LIPPREGPGGRREKDAVVTSAKNAG) are disordered.

Belongs to the RILPL family. As to quaternary structure, homodimer. Interacts with RAC1. Interacts (via N-terminus) with MYO5A, the interaction is required for its role in dendrite formation. Interacts with RAB8A; interaction is dependent on the phosphorylation of RAB8A on 'Thr-72'. Interacts with RAB10 and RAB12; interaction is dependent on the phosphorylation of 'Thr-73' on RAB10 and 'Ser-105' on RAB12. As to expression, widely expressed. Expressed at higher level in lung.

Its subcellular location is the cytoplasm. The protein resides in the cytosol. It localises to the cytoskeleton. It is found in the microtubule organizing center. The protein localises to the centrosome. Its subcellular location is the cell projection. The protein resides in the cilium. Involved in cell shape and neuronal morphogenesis, positively regulating the establishment and maintenance of dendritic spines. Plays a role in cellular protein transport, including protein transport away from primary cilia. May function via activation of RAC1 and PAK1. The polypeptide is RILP-like protein 2 (RILPL2) (Homo sapiens (Human)).